Reading from the N-terminus, the 470-residue chain is Low molecular weight neuronal intermediate filament (470 aa).

The head stretch occupies residues 1-91; that stretch reads MTSRELYTSS…KIVRTNEKEQ (91 aa). In terms of domain architecture, IF rod spans 88-399; the sequence is EKEQLQGLND…KLLEGEETRL (312 aa). Residues 91-123 are coil 1A; the sequence is QLQGLNDRFVTYIEKVHHLEQQNKLLESEVTLL. Positions 121–136 are linker 1; it reads TLLRQKHSEPSRLSHI. The segment at 137–232 is coil 1B; that stretch reads YEQEIRELRS…KVHEEEIAEL (96 aa). The tract at residues 233 to 251 is linker 12; sequence QASVQEAQISVEMDVVSKP. Positions 252-270 are coil 2A; it reads DLTAALKEIRMQYEVLSAR. Positions 271 to 279 are linker 2; that stretch reads NQQSSEEWY. Residues 280–395 are coil 2B; that stretch reads QAKIANVSLE…AAYRKLLEGE (116 aa). The interval 396–470 is tail; the sequence is ETRLTSVGGG…EKISQKAAAN (75 aa). Positions 414-431 are enriched in low complexity; that stretch reads FSSGSYSGGRSSTTSTIS. Residues 414–470 are disordered; the sequence is FSSGSYSGGRSSTTSTISIRKEEKKESPEGGKGGSSGQPKTSKPGDQEKISQKAAAN. Residues 432 to 442 are compositionally biased toward basic and acidic residues; that stretch reads IRKEEKKESPE.

Belongs to the intermediate filament family. As to expression, nervous system; in axons in the PNS and in small perikarya in the dorsal root ganglion.

The chain is Low molecular weight neuronal intermediate filament from Xenopus laevis (African clawed frog).